Reading from the N-terminus, the 447-residue chain is Alpha-1,3-mannosyl-glycoprotein 2-beta-N-acetylglucosaminyltransferase (447 aa).

Residues 1-6 (MLKKQS) are Cytoplasmic-facing. Residues 7 to 29 (AGLVLWGAIIFVGWNALLLLFFW) form a helical; Signal-anchor for type II membrane protein membrane-spanning segment. Over 30–447 (TRPAPGRLPS…TWNGYDPSWN (418 aa)) the chain is Lumenal. Residues C115 and C145 are joined by a disulfide bond. The substrate site is built by R117, D144, H190, and D212. Mn(2+) is bound at residue D213. Cysteines 239 and 305 form a disulfide. The active-site Proton acceptor is D291. S322 is a substrate binding site.

This sequence belongs to the glycosyltransferase 13 family. As to quaternary structure, interacts with MGAT4D. Interacts with BRI3. Requires Mn(2+) as cofactor. As to expression, appears to be present in all tissues.

It is found in the golgi apparatus membrane. The protein resides in the cytoplasm. The protein localises to the perinuclear region. It catalyses the reaction N(4)-(alpha-D-Man-(1-&gt;3)-[alpha-D-Man-(1-&gt;3)-[alpha-D-Man-(1-&gt;6)]-alpha-D-Man-(1-&gt;6)]-beta-D-Man-(1-&gt;4)-beta-D-GlcNAc-(1-&gt;4)-beta-D-GlcNAc)-L-asparaginyl-[protein] (N-glucan mannose isomer 5A1,2) + UDP-N-acetyl-alpha-D-glucosamine = N(4)-{beta-D-GlcNAc-(1-&gt;2)-alpha-D-Man-(1-&gt;3)-[alpha-D-Man-(1-&gt;3)-[alpha-D-Man-(1-&gt;6)]-alpha-D-Man-(1-&gt;6)]-beta-D-Man-(1-&gt;4)-beta-D-GlcNAc-(1-&gt;4)-beta-D-GlcNAc}-L-asparaginyl-[protein] + UDP + H(+). It participates in protein modification; protein glycosylation. Its function is as follows. Initiates complex N-linked carbohydrate formation. Essential for the conversion of high-mannose to hybrid and complex N-glycans. This Rattus norvegicus (Rat) protein is Alpha-1,3-mannosyl-glycoprotein 2-beta-N-acetylglucosaminyltransferase (Mgat1).